Here is a 335-residue protein sequence, read N- to C-terminus: Acetyl-coenzyme A carboxylase carboxyl transferase subunit alpha (335 aa).

In terms of domain architecture, CoA carboxyltransferase C-terminal spans 40-294; the sequence is QLETLAARRR…KEAIEKHLNA (255 aa).

Belongs to the AccA family. As to quaternary structure, acetyl-CoA carboxylase is a heterohexamer composed of biotin carboxyl carrier protein (AccB), biotin carboxylase (AccC) and two subunits each of ACCase subunit alpha (AccA) and ACCase subunit beta (AccD).

The protein localises to the cytoplasm. It catalyses the reaction N(6)-carboxybiotinyl-L-lysyl-[protein] + acetyl-CoA = N(6)-biotinyl-L-lysyl-[protein] + malonyl-CoA. It functions in the pathway lipid metabolism; malonyl-CoA biosynthesis; malonyl-CoA from acetyl-CoA: step 1/1. In terms of biological role, component of the acetyl coenzyme A carboxylase (ACC) complex. First, biotin carboxylase catalyzes the carboxylation of biotin on its carrier protein (BCCP) and then the CO(2) group is transferred by the carboxyltransferase to acetyl-CoA to form malonyl-CoA. This is Acetyl-coenzyme A carboxylase carboxyl transferase subunit alpha from Prochlorococcus marinus (strain MIT 9215).